A 182-amino-acid chain; its full sequence is NADH-quinone oxidoreductase subunit I (182 aa).

4Fe-4S ferredoxin-type domains follow at residues 50–82 (IILSRDPDGDERCVACNLCAVACPVGCISLQKA) and 92–121 (EFFRINFSRCIFCGLCEEACPTTAIQMTPD). [4Fe-4S] cluster contacts are provided by cysteine 62, cysteine 65, cysteine 68, cysteine 72, cysteine 101, cysteine 104, cysteine 107, and cysteine 111.

The protein belongs to the complex I 23 kDa subunit family. NDH-1 is composed of 14 different subunits. Subunits NuoA, H, J, K, L, M, N constitute the membrane sector of the complex. [4Fe-4S] cluster serves as cofactor.

The protein localises to the cell inner membrane. The enzyme catalyses a quinone + NADH + 5 H(+)(in) = a quinol + NAD(+) + 4 H(+)(out). In terms of biological role, NDH-1 shuttles electrons from NADH, via FMN and iron-sulfur (Fe-S) centers, to quinones in the respiratory chain. The immediate electron acceptor for the enzyme in this species is believed to be ubiquinone. Couples the redox reaction to proton translocation (for every two electrons transferred, four hydrogen ions are translocated across the cytoplasmic membrane), and thus conserves the redox energy in a proton gradient. This Psychrobacter cryohalolentis (strain ATCC BAA-1226 / DSM 17306 / VKM B-2378 / K5) protein is NADH-quinone oxidoreductase subunit I.